A 259-amino-acid polypeptide reads, in one-letter code: Thrombin-like enzyme gyroxin B1.7 (259 aa).

The signal sequence occupies residues 1-18; it reads MVLIRVLANLLILQLSYA. The propeptide occupies 19–259; that stretch reads QKSSELVIGG…AGNTAVTCPP (241 aa). One can recognise a Peptidase S1 domain in the interval 25–250; sequence VIGGDECNIN…DTEWIQSIIA (226 aa). 5 disulfides stabilise this stretch: C31–C162, C49–C65, C141–C211, C173–C190, and C201–C226. H64 serves as the catalytic Charge relay system. Residue N102 is glycosylated (N-linked (GlcNAc...) asparagine). D109 acts as the Charge relay system in catalysis. Residue S205 is the Charge relay system of the active site.

It belongs to the peptidase S1 family. Snake venom subfamily. Monomer. In terms of tissue distribution, expressed by the venom gland.

The protein resides in the secreted. Thrombin-like snake venom serine protease. Displays a specificity similar to trypsin. Releases only fibrinopeptide A in the conversion of fibrinogen to fibrin. Shows coagulant, esterase and amidase activities. Reversibly increases the permeability of the blood brain barrier (BBB) in mice. Induces the barrel rotation syndrome in mice, which is manifested by gyroxin-like, rapid rolling motions. This syndrome may be due to its effect on BBB permeability, and certainly also to other actions affecting endogenous substrates present in the endothelium, nervous tissues or blood. This chain is Thrombin-like enzyme gyroxin B1.7, found in Crotalus durissus terrificus (South American rattlesnake).